The sequence spans 130 residues: Large ribosomal subunit protein bL19 (130 aa).

It belongs to the bacterial ribosomal protein bL19 family.

Functionally, this protein is located at the 30S-50S ribosomal subunit interface and may play a role in the structure and function of the aminoacyl-tRNA binding site. The protein is Large ribosomal subunit protein bL19 of Parvibaculum lavamentivorans (strain DS-1 / DSM 13023 / NCIMB 13966).